The primary structure comprises 314 residues: Lipid A biosynthesis acyltransferase 2 (314 aa).

Residues 17–37 (LSPVYWFTWFVLGMIAGISMF) form a helical membrane-spanning segment. Residues 137–142 (HGWSVD) carry the HXXXXD motif motif.

The protein belongs to the LpxL/LpxM/LpxP family. LpxM subfamily.

It is found in the cell inner membrane. The catalysed reaction is an alpha-Kdo-(2-&gt;4)-alpha-Kdo-(2-&gt;6)-(acyl)-lipid IVA + a fatty acyl-[ACP] = an alpha-Kdo-(2-&gt;4)-alpha-Kdo-(2-&gt;6)-lipid A + holo-[ACP]. Its pathway is glycolipid biosynthesis; KDO(2)-lipid A biosynthesis; KDO(2)-lipid A from CMP-3-deoxy-D-manno-octulosonate and lipid IV(A): step 4/4. It participates in bacterial outer membrane biogenesis; lipopolysaccharide biosynthesis. Catalyzes the transfer of an acyl chain from an acyl-[acyl-carrier-protein] (ACP) to a Kdo(2)-(acyl)-lipid IV(A) to form a Kdo(2)-lipid A. This is Lipid A biosynthesis acyltransferase 2 from Shigella flexneri.